Consider the following 357-residue polypeptide: Heat-inducible transcription repressor HrcA (357 aa).

Belongs to the HrcA family.

Its function is as follows. Negative regulator of class I heat shock genes (grpE-dnaK-dnaJ and groELS operons). Prevents heat-shock induction of these operons. The polypeptide is Heat-inducible transcription repressor HrcA (Chlorobium luteolum (strain DSM 273 / BCRC 81028 / 2530) (Pelodictyon luteolum)).